A 570-amino-acid chain; its full sequence is Urease subunit alpha (570 aa).

The region spanning 132 to 570 (GGIDTHVHFL…VPMARRYFLF (439 aa)) is the Urease domain. His137, His139, and Lys220 together coordinate Ni(2+). N6-carboxylysine is present on Lys220. Residue His222 participates in substrate binding. The Ni(2+) site is built by His249 and His275. The active-site Proton donor is His323. Asp363 is a Ni(2+) binding site.

This sequence belongs to the metallo-dependent hydrolases superfamily. Urease alpha subunit family. Heterotrimer of UreA (gamma), UreB (beta) and UreC (alpha) subunits. Three heterotrimers associate to form the active enzyme. It depends on Ni cation as a cofactor. Carboxylation allows a single lysine to coordinate two nickel ions.

It is found in the cytoplasm. It carries out the reaction urea + 2 H2O + H(+) = hydrogencarbonate + 2 NH4(+). Its pathway is nitrogen metabolism; urea degradation; CO(2) and NH(3) from urea (urease route): step 1/1. This Corynebacterium glutamicum (strain ATCC 13032 / DSM 20300 / JCM 1318 / BCRC 11384 / CCUG 27702 / LMG 3730 / NBRC 12168 / NCIMB 10025 / NRRL B-2784 / 534) protein is Urease subunit alpha.